We begin with the raw amino-acid sequence, 293 residues long: MKKILAFLSIAAGSTLFFVFLFIFLSKVFSGEILLSRYIFRIGGFELRWYSTLILTGFLISYFVARKRAKNEGINLEEFDELIFYGVIAGIVGARLYYVLFNLKYYRSLWDALKIWEGGLAIHGAVIGALLTGFLYVRLKKPSFTFLQATDLFTSVLPLGQAIGRWGNFFNYEAFGVPTNLPWKMFVPEPYRPVVYKDYSFFHPTFLYESIWDLLVFFMLSVYFKRYRKRHGEVTCLYFVLYSLGRIVIERLRVDSLMIGNIKAAQLLSAVLILLGFTGFLILRSSQEPKRAF.

The next 4 helical transmembrane spans lie at 4–24, 45–65, 81–101, and 115–135; these read ILAF…LFIF, FELR…YFVA, ELIF…YVLF, and IWEG…TGFL. Residue Arg165 coordinates a 1,2-diacyl-sn-glycero-3-phospho-(1'-sn-glycerol). The next 3 membrane-spanning stretches (helical) occupy residues 204-224, 231-249, and 262-282; these read PTFL…SVYF, HGEV…RIVI, and IKAA…GFLI.

The protein belongs to the Lgt family.

It localises to the cell inner membrane. It carries out the reaction L-cysteinyl-[prolipoprotein] + a 1,2-diacyl-sn-glycero-3-phospho-(1'-sn-glycerol) = an S-1,2-diacyl-sn-glyceryl-L-cysteinyl-[prolipoprotein] + sn-glycerol 1-phosphate + H(+). Its pathway is protein modification; lipoprotein biosynthesis (diacylglyceryl transfer). Catalyzes the transfer of the diacylglyceryl group from phosphatidylglycerol to the sulfhydryl group of the N-terminal cysteine of a prolipoprotein, the first step in the formation of mature lipoproteins. The protein is Phosphatidylglycerol--prolipoprotein diacylglyceryl transferase of Thermotoga petrophila (strain ATCC BAA-488 / DSM 13995 / JCM 10881 / RKU-1).